Reading from the N-terminus, the 179-residue chain is Large ribosomal subunit protein uL6 (179 aa).

This sequence belongs to the universal ribosomal protein uL6 family. Part of the 50S ribosomal subunit.

In terms of biological role, this protein binds to the 23S rRNA, and is important in its secondary structure. It is located near the subunit interface in the base of the L7/L12 stalk, and near the tRNA binding site of the peptidyltransferase center. This is Large ribosomal subunit protein uL6 from Synechococcus elongatus (strain ATCC 33912 / PCC 7942 / FACHB-805) (Anacystis nidulans R2).